The following is a 327-amino-acid chain: DNA-directed RNA polymerase subunit alpha (327 aa).

Residues 1 to 233 are alpha N-terminal domain (alpha-NTD); the sequence is MQGSVTEFLK…EQLEAFVDLR (233 aa). The tract at residues 247–327 is alpha C-terminal domain (alpha-CTD); sequence FDPVLLRPVD…NWPPLGFIDK (81 aa).

The protein belongs to the RNA polymerase alpha chain family. As to quaternary structure, homodimer. The RNAP catalytic core consists of 2 alpha, 1 beta, 1 beta' and 1 omega subunit. When a sigma factor is associated with the core the holoenzyme is formed, which can initiate transcription.

It carries out the reaction RNA(n) + a ribonucleoside 5'-triphosphate = RNA(n+1) + diphosphate. Functionally, DNA-dependent RNA polymerase catalyzes the transcription of DNA into RNA using the four ribonucleoside triphosphates as substrates. This chain is DNA-directed RNA polymerase subunit alpha, found in Baumannia cicadellinicola subsp. Homalodisca coagulata.